The sequence spans 352 residues: Probable dual-specificity RNA methyltransferase RlmN (352 aa).

Glu99 serves as the catalytic Proton acceptor. The Radical SAM core domain maps to 105-339 (TKSRTTACVS…VTVRRSRGKD (235 aa)). Cys112 and Cys344 are oxidised to a cystine. Residues Cys119, Cys123, and Cys126 each contribute to the [4Fe-4S] cluster site. Residues 170-171 (GE), Ser202, 225-227 (SLH), and Asn301 each bind S-adenosyl-L-methionine. The active-site S-methylcysteine intermediate is the Cys344.

Belongs to the radical SAM superfamily. RlmN family. Requires [4Fe-4S] cluster as cofactor.

The protein resides in the cytoplasm. The enzyme catalyses adenosine(2503) in 23S rRNA + 2 reduced [2Fe-2S]-[ferredoxin] + 2 S-adenosyl-L-methionine = 2-methyladenosine(2503) in 23S rRNA + 5'-deoxyadenosine + L-methionine + 2 oxidized [2Fe-2S]-[ferredoxin] + S-adenosyl-L-homocysteine. The catalysed reaction is adenosine(37) in tRNA + 2 reduced [2Fe-2S]-[ferredoxin] + 2 S-adenosyl-L-methionine = 2-methyladenosine(37) in tRNA + 5'-deoxyadenosine + L-methionine + 2 oxidized [2Fe-2S]-[ferredoxin] + S-adenosyl-L-homocysteine. In terms of biological role, specifically methylates position 2 of adenine 2503 in 23S rRNA and position 2 of adenine 37 in tRNAs. The polypeptide is Probable dual-specificity RNA methyltransferase RlmN (Christiangramia forsetii (strain DSM 17595 / CGMCC 1.15422 / KT0803) (Gramella forsetii)).